We begin with the raw amino-acid sequence, 86 residues long: Small ribosomal subunit protein bS16 (86 aa).

This sequence belongs to the bacterial ribosomal protein bS16 family.

This is Small ribosomal subunit protein bS16 from Stenotrophomonas maltophilia (strain K279a).